The chain runs to 376 residues: 2-aminoethylphosphonate--pyruvate transaminase 2 (376 aa).

Position 194 is an N6-(pyridoxal phosphate)lysine (K194).

This sequence belongs to the class-V pyridoxal-phosphate-dependent aminotransferase family. PhnW subfamily. In terms of assembly, homodimer. Requires pyridoxal 5'-phosphate as cofactor.

It catalyses the reaction (2-aminoethyl)phosphonate + pyruvate = phosphonoacetaldehyde + L-alanine. Functionally, involved in phosphonate degradation. The chain is 2-aminoethylphosphonate--pyruvate transaminase 2 from Burkholderia lata (strain ATCC 17760 / DSM 23089 / LMG 22485 / NCIMB 9086 / R18194 / 383).